Here is a 664-residue protein sequence, read N- to C-terminus: Kinesin-like protein KIF2B (664 aa).

Thr125 carries the post-translational modification Phosphothreonine; by PLK1. Residues 149–177 are a coiled coil; the sequence is CLREIEKLQKQREKRRRLQLEIRARRALD. Ser204 is subject to Phosphoserine; by PLK1. Residues 213-543 form the Kinesin motor domain; it reads RICVCVRKRP…LRYANRVKEL (331 aa). ATP is bound at residue 303–310; the sequence is GQTGSGKT. The disordered stretch occupies residues 583-607; it reads VQKEEEKESDELTSTKEPAASWSRS. A coiled-coil region spans residues 642-663; that stretch reads VLTEIQKKLQLLRDDLQKKSQA.

Belongs to the TRAFAC class myosin-kinesin ATPase superfamily. Kinesin family. MCAK/KIF2 subfamily. In terms of processing, phosphorylation at Thr-125 by PLK1 is required for activity in the correction of kinetochore-microtubules attachment errors, while phosphorylation at Ser-204 also by PLK1 is required for the kinetochore localization and activity in prometaphase.

It is found in the cytoplasm. The protein resides in the cytoskeleton. It localises to the microtubule organizing center. Its subcellular location is the centrosome. The protein localises to the spindle. It is found in the chromosome. The protein resides in the centromere. It localises to the kinetochore. In terms of biological role, plus end-directed microtubule-dependent motor required for spindle assembly and chromosome movement. Has microtubule depolymerization activity. Plays a role in chromosome congression. The protein is Kinesin-like protein KIF2B of Rattus norvegicus (Rat).